Consider the following 81-residue polypeptide: Three-finger toxin 3FTx-Oxy6 (81 aa).

The first 21 residues, 1–21, serve as a signal peptide directing secretion; the sequence is MKTLLLSLVVMTIVYLDLGYT. 4 disulfides stabilise this stretch: C24/C43, C36/C61, C65/C73, and C74/C79.

The protein belongs to the three-finger toxin family. Short-chain subfamily. As to expression, expressed by the venom gland.

It localises to the secreted. The sequence is that of Three-finger toxin 3FTx-Oxy6 from Oxyuranus microlepidotus (Inland taipan).